Consider the following 56-residue polypeptide: Small ribosomal subunit protein bS21 (56 aa).

Belongs to the bacterial ribosomal protein bS21 family.

The chain is Small ribosomal subunit protein bS21 from Synechococcus sp. (strain WH7803).